We begin with the raw amino-acid sequence, 77 residues long: MKLIIFTGLVLFAIVSLIEAEEESGRVCIPLNGECSKSPDKCCDNINCDCYLRFEKGVQAGRPCFCTEKDVIFERDE.

A signal peptide spans 1-20 (MKLIIFTGLVLFAIVSLIEA). Positions 21–26 (EEESGR) are excised as a propeptide.

Belongs to the neurotoxin 19 (CSTX) family. 09 (U10-Lctx) subfamily. Contains 4 disulfide bonds. In terms of tissue distribution, expressed by the venom gland.

The protein localises to the secreted. The chain is U10-lycotoxin-Ls1b from Lycosa singoriensis (Wolf spider).